The primary structure comprises 425 residues: Serine--tRNA ligase (425 aa).

L-serine is bound at residue 230-232 (TAE). 261–263 (RSE) provides a ligand contact to ATP. E284 is a binding site for L-serine. An ATP-binding site is contributed by 348–351 (EISS). S384 is an L-serine binding site.

Belongs to the class-II aminoacyl-tRNA synthetase family. Type-1 seryl-tRNA synthetase subfamily. Homodimer. The tRNA molecule binds across the dimer.

It is found in the cytoplasm. It catalyses the reaction tRNA(Ser) + L-serine + ATP = L-seryl-tRNA(Ser) + AMP + diphosphate + H(+). It carries out the reaction tRNA(Sec) + L-serine + ATP = L-seryl-tRNA(Sec) + AMP + diphosphate + H(+). Its pathway is aminoacyl-tRNA biosynthesis; selenocysteinyl-tRNA(Sec) biosynthesis; L-seryl-tRNA(Sec) from L-serine and tRNA(Sec): step 1/1. In terms of biological role, catalyzes the attachment of serine to tRNA(Ser). Is also able to aminoacylate tRNA(Sec) with serine, to form the misacylated tRNA L-seryl-tRNA(Sec), which will be further converted into selenocysteinyl-tRNA(Sec). The polypeptide is Serine--tRNA ligase (Streptococcus pyogenes serotype M6 (strain ATCC BAA-946 / MGAS10394)).